The sequence spans 471 residues: Protoheme IX farnesyltransferase, mitochondrial (471 aa).

The N-terminal 60 residues, 1–60 (MLLSNVAVNRTVVHTQLVSGSRSALHALSRTSHSVPVTHTHQRRHIFSHKRRLSSSTLAI), are a transit peptide targeting the mitochondrion. Helical transmembrane passes span 188 to 208 (AVSL…SGSA), 247 to 267 (ITGT…VAIL), 287 to 307 (IINT…GWAA), 312 to 332 (LLHP…FPHF), 368 to 388 (LLMF…WWFV), and 430 to 450 (KLFW…MIHK).

Belongs to the UbiA prenyltransferase family.

It localises to the mitochondrion membrane. The enzyme catalyses heme b + (2E,6E)-farnesyl diphosphate + H2O = Fe(II)-heme o + diphosphate. Converts protoheme IX and farnesyl diphosphate to heme O. This Yarrowia lipolytica (strain CLIB 122 / E 150) (Yeast) protein is Protoheme IX farnesyltransferase, mitochondrial (COX10).